A 482-amino-acid polypeptide reads, in one-letter code: ATP synthase subunit beta (482 aa).

167–174 (GGAGVGKT) is a binding site for ATP.

The protein belongs to the ATPase alpha/beta chains family. In terms of assembly, F-type ATPases have 2 components, CF(1) - the catalytic core - and CF(0) - the membrane proton channel. CF(1) has five subunits: alpha(3), beta(3), gamma(1), delta(1), epsilon(1). CF(0) has three main subunits: a(1), b(2) and c(9-12). The alpha and beta chains form an alternating ring which encloses part of the gamma chain. CF(1) is attached to CF(0) by a central stalk formed by the gamma and epsilon chains, while a peripheral stalk is formed by the delta and b chains.

It is found in the cell membrane. The enzyme catalyses ATP + H2O + 4 H(+)(in) = ADP + phosphate + 5 H(+)(out). Its function is as follows. Produces ATP from ADP in the presence of a proton gradient across the membrane. The catalytic sites are hosted primarily by the beta subunits. The polypeptide is ATP synthase subunit beta (Corynebacterium aurimucosum (strain ATCC 700975 / DSM 44827 / CIP 107346 / CN-1) (Corynebacterium nigricans)).